A 153-amino-acid polypeptide reads, in one-letter code: Hemoglobin-3 (153 aa).

The residue at position 2 (S2) is an N-acetylserine. Residues 4–150 form the Globin domain; it reads GLTGPQKAAL…ICRVQGDFMK (147 aa). Position 99 (H99) interacts with heme b.

Belongs to the globin family. As to quaternary structure, homotetramer.

The protein resides in the cytoplasm. The polypeptide is Hemoglobin-3 (Phacoides pectinatus (Thick lucine)).